The chain runs to 215 residues: LysM and putative peptidoglycan-binding domain-containing protein 2 (215 aa).

The segment at 1–40 is disordered; it reads MADSSPAPSLRAGGPREPRPSAPSPPPPHSRLGSEAEEAE. A2 is modified (N-acetylalanine). 4 positions are modified to phosphoserine: S5, S24, S34, and S58. Positions 20–29 are enriched in pro residues; the sequence is PSAPSPPPPH. The LysM domain occupies 72-116; the sequence is VEHRVRAGDTLQGIALKYGVSMEQIKRANKLFTNDCIFLKKTLNI. The tract at residues 194–215 is disordered; sequence AKKLKGESRDEEGLYTASLYHS.

The chain is LysM and putative peptidoglycan-binding domain-containing protein 2 (LYSMD2) from Bos taurus (Bovine).